The sequence spans 443 residues: Exodeoxyribonuclease 7 large subunit (443 aa).

It belongs to the XseA family. As to quaternary structure, heterooligomer composed of large and small subunits.

It localises to the cytoplasm. The enzyme catalyses Exonucleolytic cleavage in either 5'- to 3'- or 3'- to 5'-direction to yield nucleoside 5'-phosphates.. Functionally, bidirectionally degrades single-stranded DNA into large acid-insoluble oligonucleotides, which are then degraded further into small acid-soluble oligonucleotides. The polypeptide is Exodeoxyribonuclease 7 large subunit (Legionella pneumophila (strain Lens)).